We begin with the raw amino-acid sequence, 84 residues long: UPF0473 protein CKL_1327 (84 aa).

Belongs to the UPF0473 family.

The protein is UPF0473 protein CKL_1327 of Clostridium kluyveri (strain ATCC 8527 / DSM 555 / NBRC 12016 / NCIMB 10680 / K1).